A 544-amino-acid polypeptide reads, in one-letter code: Cytochrome P450 monooxygenase notG' (544 aa).

An N-terminal signal peptide occupies residues 1 to 22; the sequence is MELPFSAMSLLYLLVGIAGVIS. Helical transmembrane passes span 42-62 and 66-86; these read WYTL…GLPL and AKAT…SLLL. N-linked (GlcNAc...) asparagine glycosylation is found at N226 and N404. Residue C487 coordinates heme.

The protein belongs to the cytochrome P450 family. It depends on heme as a cofactor.

The protein resides in the membrane. The protein operates within alkaloid biosynthesis. Functionally, cytochrome P450 monooxygenase; part of the gene cluster that mediates the biosynthesis of notoamide, a fungal indole alkaloid that belongs to a family of natural products containing a characteristic bicyclo[2.2.2]diazaoctane core. The first step of notoamide biosynthesis involves coupling of L-proline and L-tryptophan by the bimodular NRPS notE', to produce cyclo-L-tryptophan-L-proline called brevianamide F. The reverse prenyltransferase notF' then acts as a deoxybrevianamide E synthase and converts brevianamide F to deoxybrevianamide E via reverse prenylation at C-2 of the indole ring leading to the bicyclo[2.2.2]diazaoctane core. Deoxybrevianamide E is further hydroxylated at C-6 of the indole ring, likely catalyzed by the cytochrome P450 monooxygenase notG', to yield 6-hydroxy-deoxybrevianamide E. 6-hydroxy-deoxybrevianamide E is a specific substrate of the prenyltransferase notC' for normal prenylation at C-7 to produce 6-hydroxy-7-prenyl-deoxybrevianamide, also called notoamide S. As the proposed pivotal branching point in notoamide biosynthesis, notoamide S can be diverted to notoamide E through an oxidative pyran ring closure putatively catalyzed by either notH' cytochrome P450 monooxygenase or the notD' FAD-linked oxidoreductase. This step would be followed by an indole 2,3-epoxidation-initiated pinacol-like rearrangement catalyzed by the notB' FAD-dependent monooxygenase leading to the formation of notoamide C and notoamide D. On the other hand notoamide S is converted to notoamide T by notH' (or notD'), a bifunctional oxidase that also functions as the intramolecular Diels-Alderase responsible for generation of (-)-notoamide T. To generate antipodal (+)-notoaminide T, notH (or notD) in Aspergillus strain MF297-2 is expected to catalyze a Diels-Alder reaction leading to the opposite stereochemistry. The remaining oxidoreductase notD' (or notH') likely catalyzes the oxidative pyran ring formation to yield (-)-stephacidin A. The FAD-dependent monooxygenase notI' is highly similar to notB' and is predicted to catalyze a similar conversion from (-)-stephacidin A to (+)-notoamide B via the 2,3-epoxidation of (-)-stephacidin A followed by a pinacol-type rearrangement. Finally, it remains unclear which enzyme could be responsible for the final hydroxylation steps leading to notoamide A and sclerotiamide. The chain is Cytochrome P450 monooxygenase notG' from Aspergillus versicolor.